A 378-amino-acid chain; its full sequence is Lipid-A-disaccharide synthase (378 aa).

Belongs to the LpxB family.

The catalysed reaction is a lipid X + a UDP-2-N,3-O-bis[(3R)-3-hydroxyacyl]-alpha-D-glucosamine = a lipid A disaccharide + UDP + H(+). It functions in the pathway bacterial outer membrane biogenesis; LPS lipid A biosynthesis. In terms of biological role, condensation of UDP-2,3-diacylglucosamine and 2,3-diacylglucosamine-1-phosphate to form lipid A disaccharide, a precursor of lipid A, a phosphorylated glycolipid that anchors the lipopolysaccharide to the outer membrane of the cell. This Pseudomonas paraeruginosa (strain DSM 24068 / PA7) (Pseudomonas aeruginosa (strain PA7)) protein is Lipid-A-disaccharide synthase.